Here is a 154-residue protein sequence, read N- to C-terminus: Transcriptional repressor NrdR (154 aa).

The segment at 3–34 (CPFCGANDTKVIDSRLVAEGEQVRRRRECVAC) is a zinc-finger region. The 91-residue stretch at 49 to 139 (PRLIKQDGTR…VYRRFQDLDE (91 aa)) folds into the ATP-cone domain.

It belongs to the NrdR family. Zn(2+) is required as a cofactor.

Negatively regulates transcription of bacterial ribonucleotide reductase nrd genes and operons by binding to NrdR-boxes. The polypeptide is Transcriptional repressor NrdR (Pseudomonas putida (strain GB-1)).